The primary structure comprises 130 residues: Ribosome-binding factor A (130 aa).

This sequence belongs to the RbfA family. Monomer. Binds 30S ribosomal subunits, but not 50S ribosomal subunits or 70S ribosomes.

The protein localises to the cytoplasm. One of several proteins that assist in the late maturation steps of the functional core of the 30S ribosomal subunit. Associates with free 30S ribosomal subunits (but not with 30S subunits that are part of 70S ribosomes or polysomes). Required for efficient processing of 16S rRNA. May interact with the 5'-terminal helix region of 16S rRNA. The chain is Ribosome-binding factor A from Prochlorococcus marinus (strain MIT 9312).